The primary structure comprises 630 residues: Betaine/ectoine transporter LcoP (630 aa).

Residues 1–13 (MSTNSGNNLPESQ) are compositionally biased toward polar residues. Residues 1–28 (MSTNSGNNLPESQESPEEPHYPHDTHPG) form a disordered region. Positions 17–26 (EEPHYPHDTH) are enriched in basic and acidic residues. The next 12 membrane-spanning stretches (helical) occupy residues 47–67 (TVFGVTAALILAFIAWGISSP), 85–105 (TGWLLNFVMLIGIGTMLYIAF), 125–145 (FSWIAMMFGAGIGVGIFFFGP), 177–197 (FHWGLSAWGLYALVGGALAYS), 230–250 (MAIIATLFGTAATLGLSAIQV), 267–287 (ILIAIIAILTIGFIISSVSGV), 299–319 (ISLTLGLVLFVFITGPTLFLL), 354–374 (WTAFYWAWWIAWTPFVGMFIA), 385–405 (FALITMAIPSFILILAFTIFG), 436–456 (LPLYSITPFILIFVLAVFFVT), 479–499 (LIVVFWGLCMMGIAVVMLLTG), and 510–530 (LTILIAIPFALVLIVMAIAFI). Positions 611–630 (WADGWTPESTEEGEVDAKKD) are disordered.

This sequence belongs to the BCCT transporter (TC 2.A.15) family.

It is found in the cell membrane. Its activity is regulated as follows. Uptake is activated by hyperosmotic stress. Shows a small but significant chill stimulation around 15 degrees Celsius. In terms of biological role, involved in the uptake of osmoprotectants. Can transport betaine and ectoine. Na(+) is probably the coupling ion. The chain is Betaine/ectoine transporter LcoP from Corynebacterium glutamicum (strain ATCC 13032 / DSM 20300 / JCM 1318 / BCRC 11384 / CCUG 27702 / LMG 3730 / NBRC 12168 / NCIMB 10025 / NRRL B-2784 / 534).